We begin with the raw amino-acid sequence, 445 residues long: Crotonyl-CoA reductase (445 aa).

A Zn(2+)-binding site is contributed by E149.

The protein belongs to the zinc-containing alcohol dehydrogenase family. Crotonyl-CoA carboxylase/reductase subfamily. As to quaternary structure, homodimer. It depends on Zn(2+) as a cofactor.

It carries out the reaction butanoyl-CoA + NADP(+) = (2E)-butenoyl-CoA + NADPH + H(+). Its activity is regulated as follows. Inhibited by NADPH at concentrations above 200 uM, by MgCl (30%), by ZnCl(2) (55%), and by CoCl, MnCl and CaCl (100%). Also inhibited by iodoacetamide, N-ethylmaleamide, the thiol group inhibitor beta-chloromercuribenzoate, palmitoyl-CoA and myristoyl-CoA. Catalyzes the conversion of crotonyl-CoA to butyryl-CoA. It uses only NADP as electron donor. May have a role in providing butyryl-CoA as a starter unit for straight-chain fatty acid biosynthesis. The sequence is that of Crotonyl-CoA reductase (ccrA2) from Streptomyces avermitilis (strain ATCC 31267 / DSM 46492 / JCM 5070 / NBRC 14893 / NCIMB 12804 / NRRL 8165 / MA-4680).